A 318-amino-acid polypeptide reads, in one-letter code: Magnetosome protein MamM (318 aa).

A transmembrane domain (TMD) region spans residues 1–210; the sequence is MRKSGCAVCS…FMDAYRGLMD (210 aa). 4 helical membrane-spanning segments follow: residues 13 to 33, 39 to 59, 81 to 101, and 117 to 137; these read IGWV…FVGL, AMLA…MVII, FILS…LLVH, and LIVL…YFYS. Positions 211 to 318 are C-terminal domain (CTD); it reads HTAGEAVQNR…DEVMLSKVDN (108 aa). Asp249, His264, His285, and Glu289 together coordinate Fe cation.

It belongs to the cation diffusion facilitator (CDF) transporter (TC 2.A.4) family. In terms of assembly, forms homodimers via its C-terminal domain (CTD) in the presence of metal cations. Interacts with MamB via their CTD. Isolated CTD forms homodimers.

The protein localises to the magnetosome membrane. Its subcellular location is the cell inner membrane. In terms of biological role, essential for magnetosome formation; required for stable accumulation of MamB. May nucleate iron crystal formation. Probably binds and transports iron. Binds divalent cations, possibly up to 3 Zn(2+) per dimer in vitro, probably iron in vivo. One of 7 genes (mamLQBIEMO) able to induce magnetosome membrane biogenesis; coexpression of mamLQRBIEMO in a deletion of the 17 gene mamAB operon restores magnetosome vesicle formation but not magnetite biosynthesis. The polypeptide is Magnetosome protein MamM (Magnetospirillum gryphiswaldense (strain DSM 6361 / JCM 21280 / NBRC 15271 / MSR-1)).